We begin with the raw amino-acid sequence, 479 residues long: Glutamyl-tRNA(Gln) amidotransferase subunit A (479 aa).

Catalysis depends on charge relay system residues Lys-75 and Ser-150. The active-site Acyl-ester intermediate is the Ser-174.

Belongs to the amidase family. GatA subfamily. As to quaternary structure, heterotrimer of A, B and C subunits.

The catalysed reaction is L-glutamyl-tRNA(Gln) + L-glutamine + ATP + H2O = L-glutaminyl-tRNA(Gln) + L-glutamate + ADP + phosphate + H(+). Functionally, allows the formation of correctly charged Gln-tRNA(Gln) through the transamidation of misacylated Glu-tRNA(Gln) in organisms which lack glutaminyl-tRNA synthetase. The reaction takes place in the presence of glutamine and ATP through an activated gamma-phospho-Glu-tRNA(Gln). The polypeptide is Glutamyl-tRNA(Gln) amidotransferase subunit A (Synechococcus elongatus (strain ATCC 33912 / PCC 7942 / FACHB-805) (Anacystis nidulans R2)).